Here is a 240-residue protein sequence, read N- to C-terminus: Transcriptional regulatory protein BaeR (240 aa).

Residues 12–125 (RILIVEDEPK…EVVARVKTIL (114 aa)) form the Response regulatory domain. Asp-61 carries the post-translational modification 4-aspartylphosphate. A DNA-binding region (ompR/PhoB-type) is located at residues 131-234 (QRELQQQDAE…VYGVGYRWEA (104 aa)).

Post-translationally, phosphorylated by BaeS.

The protein resides in the cytoplasm. Its function is as follows. Member of the two-component regulatory system BaeS/BaeR. Activates the mdtABCD operon. This is Transcriptional regulatory protein BaeR (baeR) from Escherichia coli O6:H1 (strain CFT073 / ATCC 700928 / UPEC).